We begin with the raw amino-acid sequence, 527 residues long: Tubulin-specific chaperone E (527 aa).

S2 is subject to N-acetylserine. In terms of domain architecture, CAP-Gly spans G27 to R71. LRR repeat units lie at residues N154 to A175, H180 to T200, A205 to M226, G230 to Q252, T253 to A274, R278 to I299, and S308 to D329. The LRRCT domain maps to N342–D384. N6-acetyllysine is present on K463. The residue at position 495 (S495) is a Phosphoserine.

The protein belongs to the TBCE family. In terms of assembly, supercomplex made of cofactors A to E. Cofactors A and D function by capturing and stabilizing tubulin in a quasi-native conformation. Cofactor E binds to the cofactor D-tubulin complex; interaction with cofactor C then causes the release of tubulin polypeptides that are committed to the native state. Cofactors B and E can form a heterodimer which binds to alpha-tubulin and enhances their ability to dissociate tubulin heterodimers. Interacts with TBCD.

The protein resides in the cytoplasm. It localises to the cytoskeleton. Its function is as follows. Tubulin-folding protein; involved in the second step of the tubulin folding pathway and in the regulation of tubulin heterodimer dissociation. Required for correct organization of microtubule cytoskeleton and mitotic splindle, and maintenance of the neuronal microtubule network. The chain is Tubulin-specific chaperone E (TBCE) from Pongo abelii (Sumatran orangutan).